Consider the following 470-residue polypeptide: 4-O-methyltransferase 1 (470 aa).

S-adenosyl-L-methionine-binding positions include 274-275 (GG), Asp297, 328-329 (DC), and Lys344. His348 serves as the catalytic Proton acceptor.

It belongs to the class I-like SAM-binding methyltransferase superfamily. Cation-independent O-methyltransferase family. COMT subfamily.

Its function is as follows. S-adenosyl-L-methionine-dependent methyltransferase that preferentially catalyzes the methylation of 4-OH phenolic compounds like coniferyl alcohol, vanillyl alcohol and ferrulic acid. May play a role in promoting lignin degradation by methylating and inactivating free-hydroxyl phenolic compounds, products of lignin cleavage which are known inhibitors of lignin peroxidases. The chain is 4-O-methyltransferase 1 from Phanerochaete chrysosporium (strain RP-78 / ATCC MYA-4764 / FGSC 9002) (White-rot fungus).